A 213-amino-acid chain; its full sequence is 2-C-methyl-D-erythritol 4-phosphate cytidylyltransferase (213 aa).

This sequence belongs to the IspD/TarI cytidylyltransferase family. IspD subfamily.

The enzyme catalyses 2-C-methyl-D-erythritol 4-phosphate + CTP + H(+) = 4-CDP-2-C-methyl-D-erythritol + diphosphate. The protein operates within isoprenoid biosynthesis; isopentenyl diphosphate biosynthesis via DXP pathway; isopentenyl diphosphate from 1-deoxy-D-xylulose 5-phosphate: step 2/6. In terms of biological role, catalyzes the formation of 4-diphosphocytidyl-2-C-methyl-D-erythritol from CTP and 2-C-methyl-D-erythritol 4-phosphate (MEP). In Thermus thermophilus (strain ATCC BAA-163 / DSM 7039 / HB27), this protein is 2-C-methyl-D-erythritol 4-phosphate cytidylyltransferase.